Consider the following 262-residue polypeptide: LysM and putative peptidoglycan-binding domain-containing protein 3 (262 aa).

At Met1–Gly218 the chain is on the extracellular side. The LysM domain occupies Ile70–Ile114. A helical membrane pass occupies residues Trp219 to Leu239. At Tyr240–Ser262 the chain is on the cytoplasmic side.

The protein resides in the cell membrane. It localises to the golgi apparatus. Functionally, essential for Golgi structural integrity. The protein is LysM and putative peptidoglycan-binding domain-containing protein 3 (lysmd3) of Xenopus tropicalis (Western clawed frog).